Reading from the N-terminus, the 1243-residue chain is ATP-dependent helicase/nuclease subunit A (1243 aa).

One can recognise a UvrD-like helicase ATP-binding domain in the interval 2 to 475 (VNWTKEQEEA…IDLARNFRSR (474 aa)). 23-30 (AAAGSGKT) is an ATP binding site. A UvrD-like helicase C-terminal domain is found at 502–803 (AAELIYGNKM…RIMTIHKSKG (302 aa)).

Belongs to the helicase family. AddA subfamily. Heterodimer of AddA and AddB/RexB. Requires Mg(2+) as cofactor.

The enzyme catalyses Couples ATP hydrolysis with the unwinding of duplex DNA by translocating in the 3'-5' direction.. It carries out the reaction ATP + H2O = ADP + phosphate + H(+). The heterodimer acts as both an ATP-dependent DNA helicase and an ATP-dependent, dual-direction single-stranded exonuclease. Recognizes the chi site generating a DNA molecule suitable for the initiation of homologous recombination. The AddA nuclease domain is required for chi fragment generation; this subunit has the helicase and 3' -&gt; 5' nuclease activities. The chain is ATP-dependent helicase/nuclease subunit A from Oceanobacillus iheyensis (strain DSM 14371 / CIP 107618 / JCM 11309 / KCTC 3954 / HTE831).